The primary structure comprises 121 residues: Large ribosomal subunit protein uL22 (121 aa).

Belongs to the universal ribosomal protein uL22 family. In terms of assembly, part of the 50S ribosomal subunit.

This protein binds specifically to 23S rRNA; its binding is stimulated by other ribosomal proteins, e.g. L4, L17, and L20. It is important during the early stages of 50S assembly. It makes multiple contacts with different domains of the 23S rRNA in the assembled 50S subunit and ribosome. Functionally, the globular domain of the protein is located near the polypeptide exit tunnel on the outside of the subunit, while an extended beta-hairpin is found that lines the wall of the exit tunnel in the center of the 70S ribosome. The protein is Large ribosomal subunit protein uL22 of Parasynechococcus marenigrum (strain WH8102).